The sequence spans 303 residues: MVKIENAHEGVIHHAALNYYGTRLATCSSDKTVKIFEINDVNNSSSLLETLVGHEGPVWYADWCHPSLGENLLATCGYDGKVLIWKESGHGGKMQIIGKHAVHSASVNCVKWAPHEYGLILLCGSADGKISVVELKDGQIASTKILDNAHKFGVNSISWAPLMKTDSSDDGDETTAVKQFISGGNDNLVKIWKFDDDQETYVVADTLEGHKDAVTAVDWSPTTLLQSYVASVSNDKQCLVWTQDHSSKKNDWKKISVNEGKFEQKLGSVSWSLSGNLLAVSDDDKNVTIWKESGDGKWEEVVN.

WD repeat units lie at residues 7 to 46, 53 to 95, 102 to 143, 149 to 202, 209 to 251, and 261 to 300; these read AHEGVIHHAALNYYGTRLATCSSDKTVKIFEINDVNNSSS, GHEG…GKMQ, VHSA…IAST, AHKF…ETYV, GHKD…KKND, and KFEQKLGSVSWSLSGNLLAVSDDDKNVTIWKESGDGKWEE.

The protein belongs to the WD repeat SEC13 family. As to quaternary structure, the COPII coat is composed of at least 5 proteins: the SEC23/24 complex, the SEC13/31 complex, and the protein SAR1. Component of the nuclear pore complex (NPC). NPC constitutes the exclusive means of nucleocytoplasmic transport. NPCs allow the passive diffusion of ions and small molecules and the active, nuclear transport receptor-mediated bidirectional transport of macromolecules such as proteins, RNAs, ribonucleoparticles (RNPs), and ribosomal subunits across the nuclear envelope. Due to its 8-fold rotational symmetry, all subunits are present with 8 copies or multiples thereof.

It localises to the cytoplasmic vesicle. Its subcellular location is the COPII-coated vesicle membrane. The protein resides in the endoplasmic reticulum membrane. It is found in the nucleus. The protein localises to the nuclear pore complex. Component of the coat protein complex II (COPII) which promotes the formation of transport vesicles from the endoplasmic reticulum (ER). The coat has two main functions, the physical deformation of the endoplasmic reticulum membrane into vesicles and the selection of cargo molecules. It also functions as a component of the nuclear pore complex (NPC). NPC components, collectively referred to as nucleoporins (NUPs), can play the role of both NPC structural components and of docking or interaction partners for transiently associated nuclear transport factors. SEC13 is required for efficient mRNA export from the nucleus to the cytoplasm and for correct nuclear pore biogenesis and distribution. This is Protein transport protein SEC13-2 (SEC132) from Candida glabrata (strain ATCC 2001 / BCRC 20586 / JCM 3761 / NBRC 0622 / NRRL Y-65 / CBS 138) (Yeast).